Consider the following 909-residue polypeptide: DNA mismatch repair protein MutS (909 aa).

Positions 275 to 290 (QKAERPPLSRPEREEQ) are enriched in basic and acidic residues. The disordered stretch occupies residues 275–295 (QKAERPPLSRPEREEQGSTLF). 661–668 (GPNMGGKS) provides a ligand contact to ATP.

Belongs to the DNA mismatch repair MutS family.

This protein is involved in the repair of mismatches in DNA. It is possible that it carries out the mismatch recognition step. This protein has a weak ATPase activity. The polypeptide is DNA mismatch repair protein MutS (Mesorhizobium japonicum (strain LMG 29417 / CECT 9101 / MAFF 303099) (Mesorhizobium loti (strain MAFF 303099))).